A 157-amino-acid chain; its full sequence is Small ribosomal subunit protein bS16 (157 aa).

A compositionally biased stretch (basic and acidic residues) spans 125–141 (KRKAAKKAAEEAAAKEA). The interval 125–157 (KRKAAKKAAEEAAAKEAEAEEAAEDKAEEESAE) is disordered. Over residues 142-157 (EAEEAAEDKAEEESAE) the composition is skewed to acidic residues.

It belongs to the bacterial ribosomal protein bS16 family.

In Corynebacterium kroppenstedtii (strain DSM 44385 / JCM 11950 / CIP 105744 / CCUG 35717), this protein is Small ribosomal subunit protein bS16.